Here is a 669-residue protein sequence, read N- to C-terminus: Acyl-coenzyme A oxidase 1 (669 aa).

2 residues coordinate FAD: T152 and G191. The active-site Proton acceptor is the E434. Phosphotyrosine is present on Y544. Residue S551 is modified to Phosphoserine. A Microbody targeting signal motif is present at residues 667 to 669 (AHL).

It belongs to the acyl-CoA oxidase family. As to quaternary structure, homodimer. It depends on FAD as a cofactor. As to expression, expressed in glia.

It localises to the peroxisome. Its subcellular location is the nucleus. The enzyme catalyses a 2,3-saturated acyl-CoA + O2 = a (2E)-enoyl-CoA + H2O2. The protein operates within lipid metabolism; peroxisomal fatty acid beta-oxidation. Its function is as follows. Catalyzes the desaturation of acyl-CoAs to 2-trans-enoyl-CoAs. First enzyme of the fatty acid beta-oxidation pathway. This is Acyl-coenzyme A oxidase 1 from Drosophila melanogaster (Fruit fly).